A 606-amino-acid chain; its full sequence is Probable potassium transport system protein Kup 2 (606 aa).

12 helical membrane passes run 18-38 (GLVF…IMTL), 46-66 (VLGI…VEYA), 97-117 (VAFV…DGII), 140-160 (AQGV…IFQF), 169-189 (AFGP…IVSI), 204-224 (AVTF…EVIL), 247-267 (AWYF…AFIL), 286-306 (ILYI…SQAL), 339-359 (IYIG…MLIF), 368-388 (AYGL…TMIF), 395-415 (WKVP…TANF), and 418-438 (LPHG…IMII).

Belongs to the HAK/KUP transporter (TC 2.A.72) family.

The protein resides in the cell inner membrane. The catalysed reaction is K(+)(in) + H(+)(in) = K(+)(out) + H(+)(out). Transport of potassium into the cell. Likely operates as a K(+):H(+) symporter. The polypeptide is Probable potassium transport system protein Kup 2 (Geobacter metallireducens (strain ATCC 53774 / DSM 7210 / GS-15)).